The primary structure comprises 307 residues: 4-hydroxythreonine-4-phosphate dehydrogenase (307 aa).

H121 and T122 together coordinate substrate. A divalent metal cation-binding residues include H150, H189, and H246. 3 residues coordinate substrate: K254, N263, and R272.

This sequence belongs to the PdxA family. As to quaternary structure, homodimer. Zn(2+) is required as a cofactor. The cofactor is Mg(2+). Requires Co(2+) as cofactor.

It localises to the cytoplasm. The enzyme catalyses 4-(phosphooxy)-L-threonine + NAD(+) = 3-amino-2-oxopropyl phosphate + CO2 + NADH. It participates in cofactor biosynthesis; pyridoxine 5'-phosphate biosynthesis; pyridoxine 5'-phosphate from D-erythrose 4-phosphate: step 4/5. Functionally, catalyzes the NAD(P)-dependent oxidation of 4-(phosphooxy)-L-threonine (HTP) into 2-amino-3-oxo-4-(phosphooxy)butyric acid which spontaneously decarboxylates to form 3-amino-2-oxopropyl phosphate (AHAP). The chain is 4-hydroxythreonine-4-phosphate dehydrogenase from Campylobacter fetus subsp. fetus (strain 82-40).